Consider the following 188-residue polypeptide: Methylated-DNA--protein-cysteine methyltransferase (188 aa).

DNA contacts are provided by Tyr120, Gly121, and Arg134. Cys151 acts as the Nucleophile; methyl group acceptor in catalysis. Ser157 is a DNA binding site.

It belongs to the MGMT family.

It localises to the nucleus. It carries out the reaction a 6-O-methyl-2'-deoxyguanosine in DNA + L-cysteinyl-[protein] = S-methyl-L-cysteinyl-[protein] + a 2'-deoxyguanosine in DNA. The enzyme catalyses a 4-O-methyl-thymidine in DNA + L-cysteinyl-[protein] = a thymidine in DNA + S-methyl-L-cysteinyl-[protein]. Involved in the cellular defense against the biological effects of O6-methylguanine (O6-MeG) and O4-methylthymine (O4-MeT) in DNA. Repairs the methylated nucleobase in DNA by stoichiometrically transferring the methyl group to a cysteine residue in the enzyme. This is a suicide reaction: the enzyme is irreversibly inactivated. Prefers double-stranded DNA over single-stranded DNA as substrate. The protein is Methylated-DNA--protein-cysteine methyltransferase (MGT1) of Saccharomyces cerevisiae (strain YJM789) (Baker's yeast).